The primary structure comprises 802 residues: Phenylalanine--tRNA ligase beta subunit (802 aa).

One can recognise a tRNA-binding domain in the interval 38–148 (SKNFERVIVG…SEVPVGTDIS (111 aa)). In terms of domain architecture, B5 spans 403–478 (VIQKKIFVLK…RVFGYHNIPA (76 aa)). The Mg(2+) site is built by aspartate 456, aspartate 462, and aspartate 466. One can recognise an FDX-ACB domain in the interval 703–796 (SLYPRCSRDI…LQEKFNAILR (94 aa)).

Belongs to the phenylalanyl-tRNA synthetase beta subunit family. Type 1 subfamily. As to quaternary structure, tetramer of two alpha and two beta subunits. It depends on Mg(2+) as a cofactor.

The protein resides in the cytoplasm. It carries out the reaction tRNA(Phe) + L-phenylalanine + ATP = L-phenylalanyl-tRNA(Phe) + AMP + diphosphate + H(+). This is Phenylalanine--tRNA ligase beta subunit from Buchnera aphidicola subsp. Baizongia pistaciae (strain Bp).